The primary structure comprises 183 residues: MFSMVEGLQVYGQQTIQAAKYIGQGFMVTLDHMNRLPMTVQYPYEKLIPSERFRGRIHFEFDKCIACEVCVRVCPINLPVVDWEFEKNIRKKQLTSYSIDFGVCIFCGNCVEYCPTNCLSMTEEYELSTYDRHELNHDQIALGRLPLSVVEDSTIRVISGLTKLPKGTMDGHSASKNVTNFLH.

2 consecutive 4Fe-4S ferredoxin-type domains span residues 55 to 84 and 95 to 124; these read GRIH…VDWE and TSYS…MTEE. [4Fe-4S] cluster is bound by residues C64, C67, C70, C74, C104, C107, C110, and C114.

This sequence belongs to the complex I 23 kDa subunit family. As to quaternary structure, NDH is composed of at least 16 different subunits, 5 of which are encoded in the nucleus. Requires [4Fe-4S] cluster as cofactor.

It is found in the plastid. The protein resides in the chloroplast thylakoid membrane. The enzyme catalyses a plastoquinone + NADH + (n+1) H(+)(in) = a plastoquinol + NAD(+) + n H(+)(out). The catalysed reaction is a plastoquinone + NADPH + (n+1) H(+)(in) = a plastoquinol + NADP(+) + n H(+)(out). Functionally, NDH shuttles electrons from NAD(P)H:plastoquinone, via FMN and iron-sulfur (Fe-S) centers, to quinones in the photosynthetic chain and possibly in a chloroplast respiratory chain. The immediate electron acceptor for the enzyme in this species is believed to be plastoquinone. Couples the redox reaction to proton translocation, and thus conserves the redox energy in a proton gradient. The sequence is that of NAD(P)H-quinone oxidoreductase subunit I, chloroplastic from Huperzia lucidula (Shining clubmoss).